The chain runs to 1836 residues: Sodium channel protein type 4 subunit alpha (1836 aa).

Topologically, residues 1–131 (MARPSLCTLV…RGAIKVLIHA (131 aa)) are cytoplasmic. Basic and acidic residues predominate over residues 39–60 (LQRNKQMEIEEPERKPRSDLEA). Residues 39-63 (LQRNKQMEIEEPERKPRSDLEAGKN) form a disordered region. The stretch at 113-454 (LLSPFSVVRR…VVAMAYAEQN (342 aa)) is one I repeat. A helical transmembrane segment spans residues 132-150 (LFSMFIMITILTNCVFMTM). Residues 151-157 (SDPPPWS) lie on the Extracellular side of the membrane. The helical transmembrane segment at 158–178 (KNVEYTFTGIYTFESLIKILA) threads the bilayer. Residues 179-192 (RGFCVDDFTFLRDP) lie on the Cytoplasmic side of the membrane. The chain crosses the membrane as a helical span at residues 193 to 210 (WNWLDFSVIMMAYLTEFV). Residues 211–216 (DLGNIS) lie on the Extracellular side of the membrane. An N-linked (GlcNAc...) asparagine glycan is attached at N214. The helical transmembrane segment at 217–233 (ALRTFRVLRALKTITVI) threads the bilayer. Topologically, residues 234-252 (PGLKTIVGALIQSVKKLSD) are cytoplasmic. Residues 253 to 272 (VMILTVFCLSVFALVGLQLF) traverse the membrane as a helical segment. The Extracellular portion of the chain corresponds to 273–391 (MGNLRQKCVR…PNYGYTSYDT (119 aa)). Residues C280 and C360 are joined by a disulfide bond. N-linked (GlcNAc...) asparagine glycans are attached at residues N288, N291, N297, N303, N315, N321, N333, and N362. C369 and C375 form a disulfide bridge. An intramembrane region (pore-forming) is located at residues 392–416 (FSWAFLALFRLMTQDYWENLFQLTL). Over 417–423 (RAAGKTY) the chain is Extracellular. A helical membrane pass occupies residues 424 to 444 (MIFFVVIIFLGSFYLINLILA). The Cytoplasmic portion of the chain corresponds to 445-578 (VVAMAYAEQN…NIIHLIVMDP (134 aa)). The disordered stretch occupies residues 493-530 (GGEADGDPAHGKDCNGSLDTSQGEKGAPRQSSSGDSGI). Over residues 509–528 (SLDTSQGEKGAPRQSSSGDS) the composition is skewed to polar residues. The II repeat unit spans residues 560–832 (CCAPWLKFKN…QIAIGRIKLG (273 aa)). Residues 579-597 (FVDLGITICIVLNTLFMAM) form a helical membrane-spanning segment. The Extracellular segment spans residues 598–608 (EHYPMTEHFDN). A helical membrane pass occupies residues 609–628 (VLTVGNLVFTGIFTAEMVLK). The Cytoplasmic portion of the chain corresponds to 629-642 (LIAMDPYEYFQQGW). A helical transmembrane segment spans residues 643 to 662 (NIFDSIIVTLSLVELGLANV). Residues 663-664 (QG) lie on the Extracellular side of the membrane. The helical transmembrane segment at 665–682 (LSVLRSFRLLRVFKLAKS) threads the bilayer. Topologically, residues 683–698 (WPTLNMLIKIIGNSVG) are cytoplasmic. The chain crosses the membrane as a helical span at residues 699–717 (ALGNLTLVLAIIVFIFAVV). Over 718 to 746 (GMQLFGKSYKECVCKIALDCNLPRWHMHD) the chain is Extracellular. The cysteines at positions 731 and 737 are disulfide-linked. The pore-forming intramembrane region spans 747–767 (FFHSFLIVFRILCGEWIETMW). The Extracellular portion of the chain corresponds to 768 to 778 (DCMEVAGQAMC). Residues C769 and C778 are joined by a disulfide bond. Residues 779 to 797 (LTVFLMVMVIGNLVVLNLF) traverse the membrane as a helical segment. The Cytoplasmic segment spans residues 798 to 1032 (LALLLSSFSA…ACFKIVEHNW (235 aa)). Disordered stretches follow at residues 863–885 (GAGEAGEAGETAPEDEKKEPPEE) and 930–992 (ESDL…QPEE). The segment covering 876–885 (EDEKKEPPEE) has biased composition (basic and acidic residues). Acidic residues-rich tracts occupy residues 930–947 (ESDLEMPTEEETDTFSEP) and 975–992 (EDPEEQAEENPEGEQPEE). One copy of the III repeat lies at 1013–1326 (RGKKWWTLRR…KKYYNAMKKL (314 aa)). The chain crosses the membrane as a helical span at residues 1033 to 1050 (FETFIVFMILLSSGALAF). Residues 1051 to 1063 (EDIYIEQRRVIRT) lie on the Extracellular side of the membrane. The helical transmembrane segment at 1064–1082 (ILEYADKVFTYIFIMEMLL) threads the bilayer. The Cytoplasmic segment spans residues 1083 to 1096 (KWVAYGFKVYFTNA). Residues 1097–1115 (WCWLDFLIVDVSIISLVAN) traverse the membrane as a helical segment. Residues 1116 to 1123 (WLGYSELG) lie on the Extracellular side of the membrane. Residues 1124 to 1142 (PIKSLRTLRALRPLRALSR) traverse the membrane as a helical segment. Over 1143–1159 (FEGMRVVVNALLGAIPS) the chain is Cytoplasmic. A helical transmembrane segment spans residues 1160–1179 (IMNVLLVCLIFWLIFSIMGV). Over 1180–1230 (NLFAGKFYYCINTTTSERFDISEVNNKSECESLMHTGQVRWLNVKVNYDNV) the chain is Extracellular. C1189 and C1209 are oxidised to a cystine. N-linked (GlcNAc...) asparagine glycosylation is found at N1191 and N1205. An intramembrane region (pore-forming) is located at residues 1231 to 1252 (GLGYLSLLQVATFKGWMDIMYA). Residues 1253 to 1269 (AVDSREKEEQPQYEVNL) are Extracellular-facing. Residues 1270–1291 (YMYLYFVIFIIFGSFFTLNLFI) traverse the membrane as a helical segment. Topologically, residues 1292–1354 (GVIIDNFNQQ…MVYDLVTKQA (63 aa)) are cytoplasmic. Positions 1310–1312 (IFM) are important for rapid channel inactivation. Residues 1335–1633 (IPRPQNKIQG…WEKFDPDATQ (299 aa)) form an IV repeat. Residues 1355–1372 (FDITIMILICLNMVTMMV) traverse the membrane as a helical segment. Residues 1373–1383 (ETDNQSQLKVD) are Extracellular-facing. The helical transmembrane segment at 1384–1402 (ILYNINMIFIIIFTGECVL) threads the bilayer. Residues 1403-1414 (KMLALRQYYFTV) lie on the Cytoplasmic side of the membrane. Residues 1415 to 1432 (GWNIFDFVVVILSIVGLA) form a helical membrane-spanning segment. The Extracellular segment spans residues 1433–1445 (LSDLIQKYFVSPT). A helical membrane pass occupies residues 1446–1462 (LFRVIRLARIGRVLRLI). Residues 1463-1481 (RGAKGIRTLLFALMMSLPA) lie on the Cytoplasmic side of the membrane. Residues 1482–1499 (LFNIGLLLFLVMFIYSIF) traverse the membrane as a helical segment. The Extracellular segment spans residues 1500-1521 (GMSNFAYVKKESGIDDMFNFET). Residues 1522 to 1544 (FGNSIICLFEITTSAGWDGLLNP) constitute an intramembrane region (pore-forming). Residues 1545-1574 (ILNSGPPDCDPNLENPGTSVKGDCGNPSIG) are Extracellular-facing. C1553 and C1568 are disulfide-bonded. Residues 1575–1597 (ICFFCSYIIISFLIVVNMYIAII) traverse the membrane as a helical segment. The Cytoplasmic segment spans residues 1598 to 1836 (LENFNVATEE…VRPGVKESLV (239 aa)). Residues 1727–1756 (EEVCAIKIQRAYRRHLLQRSMKQASYMYRH) enclose the IQ domain. The segment at 1778 to 1836 (KMYGHENGNSSSPSPEEKGEAGDAGPTMGLMPISPSDTAWPPAPPPGQTVRPGVKESLV) is disordered.

It belongs to the sodium channel (TC 1.A.1.10) family. Nav1.4/SCN4A subfamily. The Nav1.4 voltage-gated sodium channel consists of an ion-conducting alpha subunit SCN4A which is functional on its own and a regulatory beta subunit SCN1B. SCN1B strongly enhances the presence of SCN4A at the cell surface. SCN1B is also required for rapid channel inactivation and recovery after inactivation. It prevents the decrease of channel activity in response to repetitive, high-frequency depolarizations. Interacts with the syntrophins SNTA1, SNTB1 and SNTB2 (via PDZ domain); probably links SCN4A to the actin cytoskeleton and the extracellular matrix via the dystrophin-associated protein complex and regulates its localization in muscle cells. Interacts with TMEM233; probable regulator of the channel.

It localises to the cell membrane. It catalyses the reaction Na(+)(in) = Na(+)(out). With respect to regulation, the channel is inhibited by tetrodotoxin and saxitoxin. Inhibited by the conotoxin GVIIJ. Functionally, pore-forming subunit of Nav1.4, a voltage-gated sodium (Nav) channel that directly mediates the depolarizing phase of action potentials in excitable membranes. Navs, also called VGSCs (voltage-gated sodium channels) or VDSCs (voltage-dependent sodium channels), operate by switching between closed and open conformations depending on the voltage difference across the membrane. In the open conformation they allow Na(+) ions to selectively pass through the pore, along their electrochemical gradient. The influx of Na+ ions provokes membrane depolarization, initiating the propagation of electrical signals throughout cells and tissues. Highly expressed in skeletal muscles, Nav1.4 generates the action potential crucial for muscle contraction. The chain is Sodium channel protein type 4 subunit alpha from Homo sapiens (Human).